The sequence spans 122 residues: Large ribosomal subunit protein uL14 (122 aa).

The protein belongs to the universal ribosomal protein uL14 family. As to quaternary structure, part of the 50S ribosomal subunit. Forms a cluster with proteins L3 and L19. In the 70S ribosome, L14 and L19 interact and together make contacts with the 16S rRNA in bridges B5 and B8.

Functionally, binds to 23S rRNA. Forms part of two intersubunit bridges in the 70S ribosome. The sequence is that of Large ribosomal subunit protein uL14 from Elusimicrobium minutum (strain Pei191).